The following is a 212-amino-acid chain: Peptide methionine sulfoxide reductase MsrA (212 aa).

Residue Cys51 is part of the active site.

Belongs to the MsrA Met sulfoxide reductase family.

The enzyme catalyses L-methionyl-[protein] + [thioredoxin]-disulfide + H2O = L-methionyl-(S)-S-oxide-[protein] + [thioredoxin]-dithiol. It carries out the reaction [thioredoxin]-disulfide + L-methionine + H2O = L-methionine (S)-S-oxide + [thioredoxin]-dithiol. In terms of biological role, has an important function as a repair enzyme for proteins that have been inactivated by oxidation. Catalyzes the reversible oxidation-reduction of methionine sulfoxide in proteins to methionine. This is Peptide methionine sulfoxide reductase MsrA from Vibrio parahaemolyticus serotype O3:K6 (strain RIMD 2210633).